A 734-amino-acid polypeptide reads, in one-letter code: Putative protocadherin beta-18 (734 aa).

Cadherin domains lie at 1 to 79 (MWKT…TPTF), 80 to 188 (LNNH…APEF), 189 to 293 (EKPV…PPEI), 294 to 398 (AMTS…APIF), and 399 to 508 (TQTS…SPFV). N115 carries N-linked (GlcNAc...) asparagine glycosylation. N-linked (GlcNAc...) asparagine glycosylation is found at N365 and N383. An N-linked (GlcNAc...) asparagine glycan is attached at N514. A Cadherin 6 domain is found at 515 to 621 (GSAPCTELVP…GFSQPYLPLT (107 aa)). Residues 638–658 (VVALASVSSLFLFSVFLFVAV) form a helical membrane-spanning segment.

The protein resides in the cell membrane. Functionally, potential calcium-dependent cell-adhesion protein. This chain is Putative protocadherin beta-18 (PCDHB18P), found in Homo sapiens (Human).